Consider the following 98-residue polypeptide: NADH-ubiquinone oxidoreductase chain 4L (98 aa).

3 helical membrane-spanning segments follow: residues Met-1–Ile-21, Leu-26–Leu-46, and Ala-59–Val-79.

Belongs to the complex I subunit 4L family. As to quaternary structure, core subunit of respiratory chain NADH dehydrogenase (Complex I) which is composed of 45 different subunits.

It is found in the mitochondrion inner membrane. It carries out the reaction a ubiquinone + NADH + 5 H(+)(in) = a ubiquinol + NAD(+) + 4 H(+)(out). Its function is as follows. Core subunit of the mitochondrial membrane respiratory chain NADH dehydrogenase (Complex I) which catalyzes electron transfer from NADH through the respiratory chain, using ubiquinone as an electron acceptor. Part of the enzyme membrane arm which is embedded in the lipid bilayer and involved in proton translocation. The sequence is that of NADH-ubiquinone oxidoreductase chain 4L (MT-ND4L) from Caenolestes fuliginosus (Shrew opossum).